Reading from the N-terminus, the 209-residue chain is uncharacterized protein (209 aa).

It is found in the plastid. The protein resides in the chloroplast. This is an uncharacterized protein from Porphyra purpurea (Red seaweed).